Here is a 647-residue protein sequence, read N- to C-terminus: 1-deoxy-D-xylulose-5-phosphate synthase (647 aa).

Residues His88 and 129–131 (GHA) each bind thiamine diphosphate. Residue Asp160 participates in Mg(2+) binding. Residues 161-162 (GA), Asn189, Tyr300, and Glu377 contribute to the thiamine diphosphate site. Asn189 is a binding site for Mg(2+).

Belongs to the transketolase family. DXPS subfamily. Homodimer. Mg(2+) serves as cofactor. Requires thiamine diphosphate as cofactor.

It carries out the reaction D-glyceraldehyde 3-phosphate + pyruvate + H(+) = 1-deoxy-D-xylulose 5-phosphate + CO2. The protein operates within metabolic intermediate biosynthesis; 1-deoxy-D-xylulose 5-phosphate biosynthesis; 1-deoxy-D-xylulose 5-phosphate from D-glyceraldehyde 3-phosphate and pyruvate: step 1/1. Catalyzes the acyloin condensation reaction between C atoms 2 and 3 of pyruvate and glyceraldehyde 3-phosphate to yield 1-deoxy-D-xylulose-5-phosphate (DXP). The polypeptide is 1-deoxy-D-xylulose-5-phosphate synthase (Dehalococcoides mccartyi (strain ATCC BAA-2266 / KCTC 15142 / 195) (Dehalococcoides ethenogenes (strain 195))).